Consider the following 233-residue polypeptide: Biosynthetic peptidoglycan transglycosylase (233 aa).

Residues 17 to 37 (IVLAVLALVILPYALIFFYVL) traverse the membrane as a helical segment.

It belongs to the glycosyltransferase 51 family.

It localises to the cell inner membrane. The enzyme catalyses [GlcNAc-(1-&gt;4)-Mur2Ac(oyl-L-Ala-gamma-D-Glu-L-Lys-D-Ala-D-Ala)](n)-di-trans,octa-cis-undecaprenyl diphosphate + beta-D-GlcNAc-(1-&gt;4)-Mur2Ac(oyl-L-Ala-gamma-D-Glu-L-Lys-D-Ala-D-Ala)-di-trans,octa-cis-undecaprenyl diphosphate = [GlcNAc-(1-&gt;4)-Mur2Ac(oyl-L-Ala-gamma-D-Glu-L-Lys-D-Ala-D-Ala)](n+1)-di-trans,octa-cis-undecaprenyl diphosphate + di-trans,octa-cis-undecaprenyl diphosphate + H(+). It functions in the pathway cell wall biogenesis; peptidoglycan biosynthesis. Functionally, peptidoglycan polymerase that catalyzes glycan chain elongation from lipid-linked precursors. The polypeptide is Biosynthetic peptidoglycan transglycosylase (Rhizobium leguminosarum bv. trifolii (strain WSM2304)).